A 243-amino-acid polypeptide reads, in one-letter code: Probable transcriptional regulator ycf27 (243 aa).

The region spanning 7 to 120 (KILVVDDEAS…ELEARIRSVL (114 aa)) is the Response regulatory domain. At Asp56 the chain carries 4-aspartylphosphate. Residues 76–94 (DVPIIMLTALGEVCDRITG) constitute a DNA-binding region (H-T-H motif). A DNA-binding region (ompR/PhoB-type) is located at residues 135 to 236 (SGIISIGFLK…ARGTGYLFQR (102 aa)).

It localises to the plastid. The protein localises to the chloroplast. Functionally, probable promoter-specific protein mediating the interaction between DNA and RNA polymerase. In Pyropia yezoensis (Susabi-nori), this protein is Probable transcriptional regulator ycf27 (ycf27).